Here is a 130-residue protein sequence, read N- to C-terminus: Small ribosomal subunit protein uS11 (130 aa).

It belongs to the universal ribosomal protein uS11 family. In terms of assembly, part of the 30S ribosomal subunit. Interacts with proteins S7 and S18. Binds to IF-3.

Its function is as follows. Located on the platform of the 30S subunit, it bridges several disparate RNA helices of the 16S rRNA. Forms part of the Shine-Dalgarno cleft in the 70S ribosome. The protein is Small ribosomal subunit protein uS11 of Campylobacter fetus subsp. fetus (strain 82-40).